Here is a 212-residue protein sequence, read N- to C-terminus: High frequency lysogenization protein HflD homolog (212 aa).

Residues 92-128 adopt a coiled-coil conformation; that stretch reads LIALERKLNAKSAALDELGKRIGQLERQLEHFELLSE.

This sequence belongs to the HflD family.

The protein resides in the cytoplasm. The protein localises to the cell inner membrane. The polypeptide is High frequency lysogenization protein HflD homolog (Pectobacterium atrosepticum (strain SCRI 1043 / ATCC BAA-672) (Erwinia carotovora subsp. atroseptica)).